A 374-amino-acid polypeptide reads, in one-letter code: Alanine racemase (374 aa).

Lysine 34 (proton acceptor; specific for D-alanine) is an active-site residue. Lysine 34 is subject to N6-(pyridoxal phosphate)lysine. Arginine 138 provides a ligand contact to substrate. Tyrosine 265 serves as the catalytic Proton acceptor; specific for L-alanine. Methionine 313 contributes to the substrate binding site.

Belongs to the alanine racemase family. It depends on pyridoxal 5'-phosphate as a cofactor.

It carries out the reaction L-alanine = D-alanine. It participates in amino-acid biosynthesis; D-alanine biosynthesis; D-alanine from L-alanine: step 1/1. Its function is as follows. Catalyzes the interconversion of L-alanine and D-alanine. May also act on other amino acids. The polypeptide is Alanine racemase (alr) (Hahella chejuensis (strain KCTC 2396)).